Consider the following 403-residue polypeptide: Cytoplasmic tRNA 2-thiolation protein 2 (403 aa).

The protein belongs to the CTU2/NCS2 family.

The protein localises to the cytoplasm. The protein operates within tRNA modification; 5-methoxycarbonylmethyl-2-thiouridine-tRNA biosynthesis. Functionally, plays a central role in 2-thiolation of mcm(5)S(2)U at tRNA wobble positions of tRNA(Lys), tRNA(Glu) and tRNA(Gln). May act by forming a heterodimer with NCS6/CTU1 that ligates sulfur from thiocarboxylated URM1 onto the uridine of tRNAs at wobble position. The chain is Cytoplasmic tRNA 2-thiolation protein 2 from Drosophila willistoni (Fruit fly).